A 459-amino-acid polypeptide reads, in one-letter code: Probable Delta(5) fatty acid desaturase C (459 aa).

The Cytochrome b5 heme-binding domain occupies 9-87 (KKLYSWKEIS…LKQYEIGQVS (79 aa)). 2 residues coordinate heme: His-45 and His-68. 2 helical membrane passes run 121–141 (FAFG…TSYY) and 151–171 (FYLN…FSLH). The short motif at 174–178 (HDACH) is the Histidine box-1 element. A helical transmembrane segment spans residues 187 to 207 (VWKWLGATYDLFIGASFFYWC). The short motif at 210-215 (HVIGHH) is the Histidine box-2 element. Helical transmembrane passes span 289–309 (FEII…FIIP) and 315–335 (LVNL…YLSF). Residues 394–398 (QVVHH) carry the Histidine box-3 motif.

The protein belongs to the fatty acid desaturase type 1 family. Requires Fe cation as cofactor.

It localises to the membrane. This is Probable Delta(5) fatty acid desaturase C from Dictyostelium discoideum (Social amoeba).